The sequence spans 156 residues: Arginine repressor (156 aa).

Belongs to the ArgR family.

Its subcellular location is the cytoplasm. It participates in amino-acid biosynthesis; L-arginine biosynthesis [regulation]. In terms of biological role, regulates arginine biosynthesis genes. The protein is Arginine repressor of Shewanella piezotolerans (strain WP3 / JCM 13877).